A 179-amino-acid polypeptide reads, in one-letter code: Large ribosomal subunit protein uL5 (179 aa).

The protein belongs to the universal ribosomal protein uL5 family. Part of the 50S ribosomal subunit; part of the 5S rRNA/L5/L18/L25 subcomplex. Contacts the 5S rRNA and the P site tRNA. Forms a bridge to the 30S subunit in the 70S ribosome.

In terms of biological role, this is one of the proteins that bind and probably mediate the attachment of the 5S RNA into the large ribosomal subunit, where it forms part of the central protuberance. In the 70S ribosome it contacts protein S13 of the 30S subunit (bridge B1b), connecting the 2 subunits; this bridge is implicated in subunit movement. Contacts the P site tRNA; the 5S rRNA and some of its associated proteins might help stabilize positioning of ribosome-bound tRNAs. The chain is Large ribosomal subunit protein uL5 from Oceanobacillus iheyensis (strain DSM 14371 / CIP 107618 / JCM 11309 / KCTC 3954 / HTE831).